Here is a 396-residue protein sequence, read N- to C-terminus: Apolipoprotein A-IV (396 aa).

The N-terminal stretch at 1-20 is a signal peptide; that stretch reads MFLKAVVLTLALVAVAGARA. 13 repeat units span residues 33-54, 60-81, 82-103, 115-136, 137-158, 159-180, 181-202, 203-224, 225-246, 247-268, 269-286, 287-308, and 309-330. The tract at residues 33-330 is 13 X 22 AA approximate tandem repeats; sequence DYFSQLSNNA…QMEQLRQKLG (298 aa). A disordered region spans residues 361–396; the sequence is KESQDKTLSLPELEQQQEQQQEQQQEQVQMLAPLES. Positions 374–389 are enriched in low complexity; it reads EQQQEQQQEQQQEQVQ.

Belongs to the apolipoprotein A1/A4/E family. In terms of assembly, homodimer. In terms of processing, phosphorylation sites are present in the extracellular medium. Synthesized primarily in the intestine and secreted in plasma.

Its subcellular location is the secreted. Functionally, may have a role in chylomicrons and VLDL secretion and catabolism. Required for efficient activation of lipoprotein lipase by ApoC-II; potent activator of LCAT. Apoa-IV is a major component of HDL and chylomicrons. The polypeptide is Apolipoprotein A-IV (Homo sapiens (Human)).